The following is a 443-amino-acid chain: Tubulin beta-1/beta-2 chain (443 aa).

GTP-binding residues include glutamine 11, glutamate 69, serine 138, glycine 142, threonine 143, glycine 144, asparagine 204, and asparagine 226. Residue glutamate 69 coordinates Mg(2+). Residues 424-443 (QYQDASAEEEGEFEGEEEEA) form a disordered region. Residues 429–443 (SAEEEGEFEGEEEEA) show a composition bias toward acidic residues.

Belongs to the tubulin family. In terms of assembly, dimer of alpha and beta chains. A typical microtubule is a hollow water-filled tube with an outer diameter of 25 nm and an inner diameter of 15 nM. Alpha-beta heterodimers associate head-to-tail to form protofilaments running lengthwise along the microtubule wall with the beta-tubulin subunit facing the microtubule plus end conferring a structural polarity. Microtubules usually have 13 protofilaments but different protofilament numbers can be found in some organisms and specialized cells. The cofactor is Mg(2+).

The protein resides in the cytoplasm. It is found in the cytoskeleton. Functionally, tubulin is the major constituent of microtubules, a cylinder consisting of laterally associated linear protofilaments composed of alpha- and beta-tubulin heterodimers. Microtubules grow by the addition of GTP-tubulin dimers to the microtubule end, where a stabilizing cap forms. Below the cap, tubulin dimers are in GDP-bound state, owing to GTPase activity of alpha-tubulin. The protein is Tubulin beta-1/beta-2 chain (TUBB1) of Chlamydomonas reinhardtii (Chlamydomonas smithii).